The sequence spans 396 residues: MTTNTVSRKVAWLRVVTLAVAAFIFNTTEFVPVGLLSDIAHSFHMQTAQVGIMLTIYAWVVALMSLPFMLMTSQVERRKLLICLFVVFIASHVLSFLSWSFTVLVISRIGVAFAHAIFWSITASLAIRMAPAGKRAQALSLIATGTALAMVLGLPLGRIVGQYFGWRMTFFAIGIGALITLLCLIKLLPLLPSEHSGSLKSLPLLFRRPALMSIYLLTVVVVTAHYTAYSYIEPFVQNIAGFSANFATALLLLLGGAGIIGSVIFGKLGNQYASALVSTAIALLLVCLALLLPAANSEIHLGMLSIFWGIAMMIIGLGMQVKVLALAPDATDVAMALFSGIFNIGIGAGALVGNQVSLHWSMSMIGYVGAVPAFAALIWSIIIFRRWPVTLEEQTQ.

12 helical membrane-spanning segments follow: residues 15 to 35, 50 to 70, 81 to 101, 103 to 123, 136 to 156, 170 to 190, 209 to 229, 246 to 266, 275 to 295, 299 to 319, 333 to 353, and 364 to 384; these read VVTL…PVGL, VGIM…PFML, LICL…SWSF, VLVI…SITA, AQAL…GLPL, FFAI…LLPL, PALM…YTAY, FATA…VIFG, ALVS…LPAA, IHLG…GLGM, VAMA…ALVG, and MIGY…IIIF.

This sequence belongs to the major facilitator superfamily. SotB (TC 2.A.1.2) family.

It is found in the cell inner membrane. Involved in the efflux of sugars. The physiological role may be the reduction of the intracellular concentration of toxic sugars or sugar metabolites. This Escherichia coli O6:K15:H31 (strain 536 / UPEC) protein is Probable sugar efflux transporter.